Consider the following 148-residue polypeptide: Ribonuclease pancreatic (148 aa).

The signal sequence occupies residues 1-25 (MGLEKSLILLPLLVLVFGWVQPSLG). Substrate is bound by residues lysine 32 and arginine 35. Histidine 37 acts as the Proton acceptor in catalysis. Intrachain disulfides connect cysteine 50/cysteine 108, cysteine 64/cysteine 119, cysteine 82/cysteine 134, and cysteine 89/cysteine 96. Residue asparagine 58 is glycosylated (N-linked (GlcNAc...) asparagine). A substrate-binding site is contributed by 65 to 69 (KPVNT). Asparagine 86 is a glycosylation site (N-linked (GlcNAc...) asparagine). Lysine 90 and arginine 109 together coordinate substrate. Histidine 143 serves as the catalytic Proton donor.

This sequence belongs to the pancreatic ribonuclease family. As to quaternary structure, monomer. Interacts with and forms tight 1:1 complexes with RNH1. Dimerization of two such complexes may occur. Interaction with RNH1 inhibits this protein. Pancreas.

The protein localises to the secreted. The enzyme catalyses an [RNA] containing cytidine + H2O = an [RNA]-3'-cytidine-3'-phosphate + a 5'-hydroxy-ribonucleotide-3'-[RNA].. It carries out the reaction an [RNA] containing uridine + H2O = an [RNA]-3'-uridine-3'-phosphate + a 5'-hydroxy-ribonucleotide-3'-[RNA].. Endonuclease that catalyzes the cleavage of RNA on the 3' side of pyrimidine nucleotides. Acts on single-stranded and double-stranded RNA. This Myodes glareolus (Bank vole) protein is Ribonuclease pancreatic (RNASE1).